The following is a 152-amino-acid chain: UPF0336 protein Tfu_2666 (152 aa).

One can recognise a MaoC-like domain in the interval 7–116 (YLGRAYELPE…TTITDIKSLA (110 aa)).

Belongs to the UPF0336 family.

The polypeptide is UPF0336 protein Tfu_2666 (Thermobifida fusca (strain YX)).